A 352-amino-acid polypeptide reads, in one-letter code: N-acetyl-gamma-glutamyl-phosphate reductase (352 aa).

Residue C155 is part of the active site.

This sequence belongs to the NAGSA dehydrogenase family. Type 1 subfamily.

Its subcellular location is the cytoplasm. The catalysed reaction is N-acetyl-L-glutamate 5-semialdehyde + phosphate + NADP(+) = N-acetyl-L-glutamyl 5-phosphate + NADPH + H(+). It functions in the pathway amino-acid biosynthesis; L-arginine biosynthesis; N(2)-acetyl-L-ornithine from L-glutamate: step 3/4. Functionally, catalyzes the NADPH-dependent reduction of N-acetyl-5-glutamyl phosphate to yield N-acetyl-L-glutamate 5-semialdehyde. This is N-acetyl-gamma-glutamyl-phosphate reductase from Acaryochloris marina (strain MBIC 11017).